We begin with the raw amino-acid sequence, 218 residues long: MPMTLGYWDIRGLAHAIRLLLEYTDSSYVEKKYTLGDAPDYDRSQWLNEKFKLGLDFPNLPYLIDGAHKITQSNAILRYIARKHNLCGETEEEKIRVDILENQVMDNHMELVRLCYDPDFEKLKPKYLEELPEKLKLYSEFLGKRPWFAGDKITFVDFLAYDVLDMKRIFEPKCLDAFLNLKDFISRFEGLKKISAYMKSSQFLRGLLFGKSATWNSK.

Residues 2 to 88 (PMTLGYWDIR…YIARKHNLCG (87 aa)) form the GST N-terminal domain. Glutathione is bound by residues 7–8 (YW), 46–50 (WLNEK), 59–60 (NL), and 72–73 (QS). Positions 90–207 (TEEEKIRVDI…MKSSQFLRGL (118 aa)) constitute a GST C-terminal domain. Substrate is bound at residue Tyr116.

The protein belongs to the GST superfamily. Mu family. In terms of assembly, homodimer.

It is found in the cytoplasm. It catalyses the reaction RX + glutathione = an S-substituted glutathione + a halide anion + H(+). Its function is as follows. Conjugation of reduced glutathione to a wide number of exogenous and endogenous hydrophobic electrophiles. In Homo sapiens (Human), this protein is Glutathione S-transferase Mu 5 (GSTM5).